Consider the following 424-residue polypeptide: Cyclin-dependent kinase D-1 (424 aa).

Residues 19 to 299 form the Protein kinase domain; that stretch reads YLKREVLGEG…AQQALEHRYF (281 aa). Residues 25–33 and Lys48 contribute to the ATP site; that span reads LGEGTYGVV. The residue at position 29 (Thr29) is a Phosphothreonine. Tyr30 is modified (phosphotyrosine). Asp141 (proton acceptor) is an active-site residue. A Phosphoserine modification is found at Ser168. At Thr174 the chain carries Phosphothreonine. Disordered regions lie at residues 303 to 337 and 359 to 424; these read PAPTKPSQLPRPPPKGDSGNNKIPDLNLQDGPVVL and ADRT…GYTE. The span at 359–374 shows a compositional bias: basic and acidic residues; it reads ADRTEEHPSGARHMDD.

The protein belongs to the protein kinase superfamily. CMGC Ser/Thr protein kinase family. CDC2/CDKX subfamily.

It is found in the nucleus. The catalysed reaction is L-seryl-[protein] + ATP = O-phospho-L-seryl-[protein] + ADP + H(+). The enzyme catalyses L-threonyl-[protein] + ATP = O-phospho-L-threonyl-[protein] + ADP + H(+). It carries out the reaction [DNA-directed RNA polymerase] + ATP = phospho-[DNA-directed RNA polymerase] + ADP + H(+). The polypeptide is Cyclin-dependent kinase D-1 (CDKD-1) (Oryza sativa subsp. indica (Rice)).